Here is a 254-residue protein sequence, read N- to C-terminus: NAD kinase (254 aa).

The active-site Proton acceptor is D44. NAD(+) contacts are provided by residues 44–45 (DG), 114–115 (NE), D144, A152, 155–160 (TAYNYS), and A179.

This sequence belongs to the NAD kinase family. A divalent metal cation serves as cofactor.

It localises to the cytoplasm. It carries out the reaction NAD(+) + ATP = ADP + NADP(+) + H(+). Functionally, involved in the regulation of the intracellular balance of NAD and NADP, and is a key enzyme in the biosynthesis of NADP. Catalyzes specifically the phosphorylation on 2'-hydroxyl of the adenosine moiety of NAD to yield NADP. The sequence is that of NAD kinase from Cereibacter sphaeroides (strain ATCC 17023 / DSM 158 / JCM 6121 / CCUG 31486 / LMG 2827 / NBRC 12203 / NCIMB 8253 / ATH 2.4.1.) (Rhodobacter sphaeroides).